The following is a 54-amino-acid chain: Ovomucoid (54 aa).

One can recognise a Kazal-like domain in the interval 4–54 (VDCSDYPKPVCSLEDMPLCGSDSKTYSNKCNFCNAVVDSNGTLTLSHFGKC). 3 disulfide bridges follow: C6–C36, C14–C33, and C22–C54. An N-linked (GlcNAc...) asparagine glycan is attached at N43.

The protein localises to the secreted. The polypeptide is Ovomucoid (Vultur gryphus (Andean condor)).